Here is a 417-residue protein sequence, read N- to C-terminus: NADH-quinone oxidoreductase subunit D (417 aa).

The protein belongs to the complex I 49 kDa subunit family. In terms of assembly, NDH-1 is composed of 14 different subunits. Subunits NuoB, C, D, E, F, and G constitute the peripheral sector of the complex.

It is found in the cell inner membrane. The catalysed reaction is a quinone + NADH + 5 H(+)(in) = a quinol + NAD(+) + 4 H(+)(out). Its function is as follows. NDH-1 shuttles electrons from NADH, via FMN and iron-sulfur (Fe-S) centers, to quinones in the respiratory chain. The immediate electron acceptor for the enzyme in this species is believed to be ubiquinone. Couples the redox reaction to proton translocation (for every two electrons transferred, four hydrogen ions are translocated across the cytoplasmic membrane), and thus conserves the redox energy in a proton gradient. The sequence is that of NADH-quinone oxidoreductase subunit D from Francisella tularensis subsp. mediasiatica (strain FSC147).